Consider the following 443-residue polypeptide: Ribulose bisphosphate carboxylase large chain (443 aa).

K7 is subject to N6,N6,N6-trimethyllysine. Substrate contacts are provided by N116 and T166. K168 acts as the Proton acceptor in catalysis. Position 170 (K170) interacts with substrate. K194, D196, and E197 together coordinate Mg(2+). K194 carries the post-translational modification N6-carboxylysine. H287 serves as the catalytic Proton acceptor. Positions 288, 320, and 372 each coordinate substrate.

The protein belongs to the RuBisCO large chain family. Type I subfamily. Heterohexadecamer of 8 large chains and 8 small chains; disulfide-linked. The disulfide link is formed within the large subunit homodimers. Mg(2+) is required as a cofactor. Post-translationally, the disulfide bond which can form in the large chain dimeric partners within the hexadecamer appears to be associated with oxidative stress and protein turnover.

The protein localises to the plastid. It is found in the chloroplast. It carries out the reaction 2 (2R)-3-phosphoglycerate + 2 H(+) = D-ribulose 1,5-bisphosphate + CO2 + H2O. The enzyme catalyses D-ribulose 1,5-bisphosphate + O2 = 2-phosphoglycolate + (2R)-3-phosphoglycerate + 2 H(+). Its function is as follows. RuBisCO catalyzes two reactions: the carboxylation of D-ribulose 1,5-bisphosphate, the primary event in carbon dioxide fixation, as well as the oxidative fragmentation of the pentose substrate in the photorespiration process. Both reactions occur simultaneously and in competition at the same active site. This Abies sachalinensis (Sakhalin fir) protein is Ribulose bisphosphate carboxylase large chain.